The primary structure comprises 334 residues: ADP-L-glycero-D-manno-heptose-6-epimerase (334 aa).

NADP(+)-binding positions include Phe-11–Ile-12, Asp-32–Asn-33, Lys-39, Lys-54, Gln-77–Ser-81, and Asn-94. Catalysis depends on Tyr-141, which acts as the Proton acceptor. Position 145 (Lys-145) interacts with NADP(+). Asn-171 contributes to the substrate binding site. NADP(+) is bound by residues Val-172 and Lys-180. Lys-180 serves as the catalytic Proton acceptor. Residues Arg-182, His-189, Phe-203–Asn-206, Arg-216, and Tyr-295 contribute to the substrate site.

The protein belongs to the NAD(P)-dependent epimerase/dehydratase family. HldD subfamily. Homopentamer. The cofactor is NADP(+).

The catalysed reaction is ADP-D-glycero-beta-D-manno-heptose = ADP-L-glycero-beta-D-manno-heptose. Its pathway is nucleotide-sugar biosynthesis; ADP-L-glycero-beta-D-manno-heptose biosynthesis; ADP-L-glycero-beta-D-manno-heptose from D-glycero-beta-D-manno-heptose 7-phosphate: step 4/4. It functions in the pathway bacterial outer membrane biogenesis; LOS core biosynthesis. Functionally, catalyzes the interconversion between ADP-D-glycero-beta-D-manno-heptose and ADP-L-glycero-beta-D-manno-heptose via an epimerization at carbon 6 of the heptose. This chain is ADP-L-glycero-D-manno-heptose-6-epimerase, found in Neisseria gonorrhoeae.